Reading from the N-terminus, the 378-residue chain is MKILVDENMPYARELFSRLGEVQAVPGRPIPQAALDDADALMVRSVTQVNRDLLAGKNIRFVGTATAGTDHVDEDYLREAGVGFSAAPGCNAIAVVEYVFSALLMLAERDGFALTDRTVGIVGVGNVGSRLQARLEALGVRTLLCDPPRADRGDSGDFRTLDELVREADILTFHTPLFKEGPYKTLHLADEALIARLKPGAILINACRGPVVDNAALLARLEAGQPLSVVLDVWEPEPALNVELLKRVDIGTAHIAGYTLEGKARGTTQVFEAYSQFLGTPQQVALATLLPPPEFGRITLQGPLDQPTLKRLVHLVYDVRRDDAPLRRVAGMPGEFDKLRKNYQERREWSSLYVQCDDEAAAALLQKLGFNATHHPIR.

The substrate site is built by serine 45 and threonine 66. Residues aspartate 146 and threonine 175 each contribute to the NAD(+) site. Residue arginine 208 is part of the active site. Aspartate 232 is an NAD(+) binding site. The active site involves glutamate 237. Residue histidine 254 is the Proton donor of the active site. Glycine 257 is a binding site for NAD(+). Tyrosine 258 is a substrate binding site.

The protein belongs to the D-isomer specific 2-hydroxyacid dehydrogenase family. PdxB subfamily. Homodimer.

It is found in the cytoplasm. The catalysed reaction is 4-phospho-D-erythronate + NAD(+) = (R)-3-hydroxy-2-oxo-4-phosphooxybutanoate + NADH + H(+). It participates in cofactor biosynthesis; pyridoxine 5'-phosphate biosynthesis; pyridoxine 5'-phosphate from D-erythrose 4-phosphate: step 2/5. Its function is as follows. Catalyzes the oxidation of erythronate-4-phosphate to 3-hydroxy-2-oxo-4-phosphonooxybutanoate. This Cronobacter sakazakii (strain ATCC BAA-894) (Enterobacter sakazakii) protein is Erythronate-4-phosphate dehydrogenase.